The primary structure comprises 445 residues: UNC93-like protein MFSD11 (445 aa).

The helical transmembrane segment at 8 to 28 (LLNIVILGVGFMFMFTAFQTS) threads the bilayer. A glycan (N-linked (GlcNAc...) asparagine) is linked at Asn-40. Helical transmembrane passes span 52–72 (LAII…VIAV), 74–94 (GCQM…AMFI), 98–118 (TWSF…LWTA), and 138–158 (IFWA…YLAW). N-linked (GlcNAc...) asparagine glycosylation occurs at Asn-163. Helical transmembrane passes span 170–190 (RTVF…FFLI), 239–259 (MLLL…YSGV), 277–297 (LIGL…GLFG), 309–329 (PVVI…YLYM), 343–363 (LSAF…LLGL), 385–405 (APAF…AFFY), and 415–435 (LLIL…VEWG).

Belongs to the unc-93 family.

The protein resides in the membrane. The polypeptide is UNC93-like protein MFSD11 (mfsd11) (Xenopus laevis (African clawed frog)).